Here is a 529-residue protein sequence, read N- to C-terminus: Peptide chain release factor 3 (529 aa).

The 270-residue stretch at 11-280 (AKRRTFAIIS…GLVAWAPAPM (270 aa)) folds into the tr-type G domain. Residues 20–27 (SHPDAGKT), 88–92 (DTPGH), and 142–145 (NKLD) contribute to the GTP site.

The protein belongs to the TRAFAC class translation factor GTPase superfamily. Classic translation factor GTPase family. PrfC subfamily.

The protein resides in the cytoplasm. Its function is as follows. Increases the formation of ribosomal termination complexes and stimulates activities of RF-1 and RF-2. It binds guanine nucleotides and has strong preference for UGA stop codons. It may interact directly with the ribosome. The stimulation of RF-1 and RF-2 is significantly reduced by GTP and GDP, but not by GMP. The sequence is that of Peptide chain release factor 3 from Salmonella gallinarum (strain 287/91 / NCTC 13346).